The chain runs to 188 residues: Peptide methionine sulfoxide reductase MsrA (188 aa).

The segment at 1–25 is disordered; it reads MEGNEKAEQKNATSEESTDIFENPG. The active site involves Cys37.

The protein belongs to the MsrA Met sulfoxide reductase family.

The catalysed reaction is L-methionyl-[protein] + [thioredoxin]-disulfide + H2O = L-methionyl-(S)-S-oxide-[protein] + [thioredoxin]-dithiol. The enzyme catalyses [thioredoxin]-disulfide + L-methionine + H2O = L-methionine (S)-S-oxide + [thioredoxin]-dithiol. In terms of biological role, has an important function as a repair enzyme for proteins that have been inactivated by oxidation. Catalyzes the reversible oxidation-reduction of methionine sulfoxide in proteins to methionine. This Methanosarcina acetivorans (strain ATCC 35395 / DSM 2834 / JCM 12185 / C2A) protein is Peptide methionine sulfoxide reductase MsrA.